The sequence spans 331 residues: NADH-quinone oxidoreductase subunit H (331 aa).

The next 8 membrane-spanning stretches (helical) occupy residues 7 to 27, 81 to 101, 114 to 134, 154 to 174, 187 to 207, 238 to 258, 271 to 291, and 310 to 330; these read ALVT…AVVI, MIFT…FAIV, IGIL…LFAG, ISYE…VGSF, VWFI…GVAV, FFVG…TLFF, WLSF…FILI, and VCLP…LAAA.

This sequence belongs to the complex I subunit 1 family. As to quaternary structure, NDH-1 is composed of 13 different subunits. Subunits NuoA, H, J, K, L, M, N constitute the membrane sector of the complex.

The protein resides in the cell inner membrane. It carries out the reaction a quinone + NADH + 5 H(+)(in) = a quinol + NAD(+) + 4 H(+)(out). NDH-1 shuttles electrons from NADH, via FMN and iron-sulfur (Fe-S) centers, to quinones in the respiratory chain. The immediate electron acceptor for the enzyme in this species is believed to be ubiquinone. Couples the redox reaction to proton translocation (for every two electrons transferred, four hydrogen ions are translocated across the cytoplasmic membrane), and thus conserves the redox energy in a proton gradient. This subunit may bind ubiquinone. The sequence is that of NADH-quinone oxidoreductase subunit H from Pseudomonas paraeruginosa (strain DSM 24068 / PA7) (Pseudomonas aeruginosa (strain PA7)).